Consider the following 329-residue polypeptide: L-lactate dehydrogenase (329 aa).

Residues Val18, Glu39, Lys46, Tyr71, and Gly85–Ala86 contribute to the NAD(+) site. Positions 88 and 94 each coordinate substrate. NAD(+) is bound by residues Ser107, Ala124–Asn126, and Ser149. Asn126–Asp129 contacts substrate. Asp154–Arg157 is a substrate binding site. Arg159 and His174 together coordinate beta-D-fructose 1,6-bisphosphate. The active-site Proton acceptor is His181. Tyr226 is subject to Phosphotyrosine. Thr235 is a substrate binding site.

This sequence belongs to the LDH/MDH superfamily. LDH family. Homotetramer.

Its subcellular location is the cytoplasm. It carries out the reaction (S)-lactate + NAD(+) = pyruvate + NADH + H(+). The protein operates within fermentation; pyruvate fermentation to lactate; (S)-lactate from pyruvate: step 1/1. Its activity is regulated as follows. Allosterically activated by fructose 1,6-bisphosphate (FBP). In terms of biological role, catalyzes the conversion of lactate to pyruvate. In Streptococcus equinus (Streptococcus bovis), this protein is L-lactate dehydrogenase.